An 84-amino-acid chain; its full sequence is Small ribosomal subunit protein uS17 (84 aa).

It belongs to the universal ribosomal protein uS17 family. Part of the 30S ribosomal subunit.

One of the primary rRNA binding proteins, it binds specifically to the 5'-end of 16S ribosomal RNA. The chain is Small ribosomal subunit protein uS17 from Vibrio cholerae serotype O1 (strain ATCC 39541 / Classical Ogawa 395 / O395).